Here is a 464-residue protein sequence, read N- to C-terminus: Cysteine--tRNA ligase 1 (464 aa).

Residue Cys-28 coordinates Zn(2+). The 'HIGH' region motif lies at 30–40 (VTIYDLCHIGH). Positions 209, 234, and 238 each coordinate Zn(2+). Positions 266-270 (KMSKS) match the 'KMSKS' region motif. Position 269 (Lys-269) interacts with ATP.

Belongs to the class-I aminoacyl-tRNA synthetase family. Monomer. Zn(2+) is required as a cofactor.

It is found in the cytoplasm. It catalyses the reaction tRNA(Cys) + L-cysteine + ATP = L-cysteinyl-tRNA(Cys) + AMP + diphosphate. This Photobacterium profundum (strain SS9) protein is Cysteine--tRNA ligase 1.